Here is a 287-residue protein sequence, read N- to C-terminus: 4-diphosphocytidyl-2-C-methyl-D-erythritol kinase (287 aa).

Lys-12 is a catalytic residue. An ATP-binding site is contributed by 97–107; the sequence is PMGGGLGGGSS. Residue Asp-139 is part of the active site.

It belongs to the GHMP kinase family. IspE subfamily.

The catalysed reaction is 4-CDP-2-C-methyl-D-erythritol + ATP = 4-CDP-2-C-methyl-D-erythritol 2-phosphate + ADP + H(+). Its pathway is isoprenoid biosynthesis; isopentenyl diphosphate biosynthesis via DXP pathway; isopentenyl diphosphate from 1-deoxy-D-xylulose 5-phosphate: step 3/6. Functionally, catalyzes the phosphorylation of the position 2 hydroxy group of 4-diphosphocytidyl-2C-methyl-D-erythritol. The polypeptide is 4-diphosphocytidyl-2-C-methyl-D-erythritol kinase (Marinobacter nauticus (strain ATCC 700491 / DSM 11845 / VT8) (Marinobacter aquaeolei)).